Reading from the N-terminus, the 468-residue chain is UDP-N-acetylmuramate--L-alanine ligase (468 aa).

112-118 (GMHGKTT) is a binding site for ATP.

The protein belongs to the MurCDEF family.

It localises to the cytoplasm. It carries out the reaction UDP-N-acetyl-alpha-D-muramate + L-alanine + ATP = UDP-N-acetyl-alpha-D-muramoyl-L-alanine + ADP + phosphate + H(+). The protein operates within cell wall biogenesis; peptidoglycan biosynthesis. Cell wall formation. This is UDP-N-acetylmuramate--L-alanine ligase from Koribacter versatilis (strain Ellin345).